The chain runs to 203 residues: Recombination protein RecR (203 aa).

The segment at 58-73 (CDYCGNLDVVSICNIC) adopts a C4-type zinc-finger fold. The Toprim domain occupies 81-177 (SIIAIVESVA…KISKLASGIP (97 aa)).

This sequence belongs to the RecR family.

In terms of biological role, may play a role in DNA repair. It seems to be involved in an RecBC-independent recombinational process of DNA repair. It may act with RecF and RecO. This chain is Recombination protein RecR, found in Orientia tsutsugamushi (strain Boryong) (Rickettsia tsutsugamushi).